The sequence spans 299 residues: Ribosomal RNA small subunit methyltransferase H (299 aa).

S-adenosyl-L-methionine is bound by residues 35–37, Asp-54, Tyr-80, Asp-101, and Gln-108; that span reads GGH.

The protein belongs to the methyltransferase superfamily. RsmH family.

It is found in the cytoplasm. The enzyme catalyses cytidine(1402) in 16S rRNA + S-adenosyl-L-methionine = N(4)-methylcytidine(1402) in 16S rRNA + S-adenosyl-L-homocysteine + H(+). Specifically methylates the N4 position of cytidine in position 1402 (C1402) of 16S rRNA. This Coprothermobacter proteolyticus (strain ATCC 35245 / DSM 5265 / OCM 4 / BT) protein is Ribosomal RNA small subunit methyltransferase H.